A 409-amino-acid chain; its full sequence is Elongation factor Tu, chloroplastic (409 aa).

Positions 10–214 (KPHVNIGTIG…AVDEYIPTPE (205 aa)) constitute a tr-type G domain. The segment at 19 to 26 (GHVDHGKT) is G1. Position 19–26 (19–26 (GHVDHGKT)) interacts with GTP. Threonine 26 is a binding site for Mg(2+). The interval 60–64 (GITIN) is G2. Residues 81–84 (DCPG) form a G3 region. GTP contacts are provided by residues 81–85 (DCPGH) and 136–139 (NKED). The interval 136 to 139 (NKED) is G4. Residues 174–176 (SAL) are G5.

It belongs to the TRAFAC class translation factor GTPase superfamily. Classic translation factor GTPase family. EF-Tu/EF-1A subfamily.

The protein resides in the plastid. Its subcellular location is the chloroplast. The catalysed reaction is GTP + H2O = GDP + phosphate + H(+). Functionally, GTP hydrolase that promotes the GTP-dependent binding of aminoacyl-tRNA to the A-site of ribosomes during protein biosynthesis. The sequence is that of Elongation factor Tu, chloroplastic (tufA) from Trieres chinensis (Marine centric diatom).